We begin with the raw amino-acid sequence, 240 residues long: Mitochondrial inner membrane protease ATP23 (240 aa).

Residue histidine 140 participates in a divalent metal cation binding. Residue glutamate 141 is part of the active site. Histidine 144 is a binding site for a divalent metal cation.

This sequence belongs to the peptidase M76 family.

It localises to the mitochondrion inner membrane. Functionally, has a dual role in the assembly of mitochondrial ATPase. Acts as a protease that removes N-terminal residues of mitochondrial ATPase CF(0) subunit 6 at the intermembrane space side. Also involved in the correct assembly of the membrane-embedded ATPase CF(0) particle, probably mediating association of subunit 6 with the subunit 9 ring. This is Mitochondrial inner membrane protease ATP23 (ATP23) from Scheffersomyces stipitis (strain ATCC 58785 / CBS 6054 / NBRC 10063 / NRRL Y-11545) (Yeast).